The following is a 57-amino-acid chain: UPF0337 protein SCO0678 (57 aa).

2 stretches are compositionally biased toward basic and acidic residues: residues 1–22 (MAGN…KEAA) and 42–57 (GDAR…VFRH). The tract at residues 1-57 (MAGNEKSRAKMEQAKGKAKEAAGRAVGNERMTAEGRAAQSKGDARQAKEKGKDVFRH) is disordered.

It belongs to the UPF0337 (CsbD) family.

In Streptomyces coelicolor (strain ATCC BAA-471 / A3(2) / M145), this protein is UPF0337 protein SCO0678.